Here is a 155-residue protein sequence, read N- to C-terminus: SsrA-binding protein (155 aa).

Belongs to the SmpB family.

It is found in the cytoplasm. In terms of biological role, required for rescue of stalled ribosomes mediated by trans-translation. Binds to transfer-messenger RNA (tmRNA), required for stable association of tmRNA with ribosomes. tmRNA and SmpB together mimic tRNA shape, replacing the anticodon stem-loop with SmpB. tmRNA is encoded by the ssrA gene; the 2 termini fold to resemble tRNA(Ala) and it encodes a 'tag peptide', a short internal open reading frame. During trans-translation Ala-aminoacylated tmRNA acts like a tRNA, entering the A-site of stalled ribosomes, displacing the stalled mRNA. The ribosome then switches to translate the ORF on the tmRNA; the nascent peptide is terminated with the 'tag peptide' encoded by the tmRNA and targeted for degradation. The ribosome is freed to recommence translation, which seems to be the essential function of trans-translation. The protein is SsrA-binding protein of Geobacillus kaustophilus (strain HTA426).